We begin with the raw amino-acid sequence, 921 residues long: Isoleucine--tRNA ligase 1 (921 aa).

Residues proline 57 to histidine 67 carry the 'HIGH' region motif. L-isoleucyl-5'-AMP is bound at residue glutamate 552. The short motif at lysine 593 to serine 597 is the 'KMSKS' region element. Position 596 (lysine 596) interacts with ATP. Residues cysteine 888, cysteine 891, cysteine 908, and cysteine 911 each contribute to the Zn(2+) site.

It belongs to the class-I aminoacyl-tRNA synthetase family. IleS type 1 subfamily. In terms of assembly, monomer. The cofactor is Zn(2+).

Its subcellular location is the cytoplasm. It catalyses the reaction tRNA(Ile) + L-isoleucine + ATP = L-isoleucyl-tRNA(Ile) + AMP + diphosphate. Functionally, catalyzes the attachment of isoleucine to tRNA(Ile). As IleRS can inadvertently accommodate and process structurally similar amino acids such as valine, to avoid such errors it has two additional distinct tRNA(Ile)-dependent editing activities. One activity is designated as 'pretransfer' editing and involves the hydrolysis of activated Val-AMP. The other activity is designated 'posttransfer' editing and involves deacylation of mischarged Val-tRNA(Ile). This is Isoleucine--tRNA ligase 1 from Bacillus cereus (strain ZK / E33L).